We begin with the raw amino-acid sequence, 199 residues long: Putative HMP/thiamine permease protein YkoE (199 aa).

The next 6 membrane-spanning stretches (helical) occupy residues isoleucine 9–phenylalanine 29, isoleucine 40–isoleucine 60, proline 63–proline 83, glycine 85–alanine 105, proline 114–valine 134, and glycine 143–leucine 163.

In terms of assembly, the complex is composed of two ATP-binding proteins (YkoD), two transmembrane proteins (YkoC and YkoE) and a solute-binding protein (YkoF).

It is found in the cell membrane. In terms of biological role, part of the ABC transporter complex YkoCDEF that could transport hydroxymethylpyrimidine (HMP) and/or thiamine. Could also transport other HMP-containing products. Probably responsible for the translocation of the substrate across the membrane. This chain is Putative HMP/thiamine permease protein YkoE (ykoE), found in Bacillus subtilis (strain 168).